We begin with the raw amino-acid sequence, 469 residues long: Cysteine protease ATG4 (469 aa).

The interval 48-99 (KNIKADDHHPQTPPSVLKAETETQEAHDTAQPPNPPTNAPDTPPDSISSSFS) is disordered. The span at 66 to 75 (AETETQEAHD) shows a compositional bias: basic and acidic residues. Residues 79-90 (PPNPPTNAPDTP) are compositionally biased toward pro residues. The active-site Nucleophile is cysteine 172. Residues aspartate 362 and histidine 364 contribute to the active site. The tract at residues 443 to 469 (GSSEGRESAIDEVETLSDDDTDTIHEA) is disordered. The span at 452 to 463 (IDEVETLSDDDT) shows a compositional bias: acidic residues.

Belongs to the peptidase C54 family. As to quaternary structure, interacts with ATG8.

Its subcellular location is the cytoplasm. The protein localises to the nucleus. It is found in the preautophagosomal structure. It carries out the reaction [protein]-C-terminal L-amino acid-glycyl-phosphatidylethanolamide + H2O = [protein]-C-terminal L-amino acid-glycine + a 1,2-diacyl-sn-glycero-3-phosphoethanolamine. In terms of biological role, cysteine protease that plays a key role in cytoplasm to vacuole transport (Cvt) and autophagy by mediating both proteolytic activation and delipidation of ATG8. Required for selective autophagic degradation of the nucleus (nucleophagy) as well as for mitophagy which contributes to regulate mitochondrial quantity and quality by eliminating the mitochondria to a basal level to fulfill cellular energy requirements and preventing excess ROS production. The protease activity is required for proteolytic activation of ATG8: cleaves the C-terminal amino acid of ATG8 to reveal a C-terminal glycine. ATG8 ubiquitin-like activity requires the exposure of the glycine at the C-terminus for its conjugation to phosphatidylethanolamine (PE) and its insertion to membranes, which is necessary for autophagy. The ATG8-PE conjugate mediates tethering between adjacent membranes and stimulates membrane hemifusion, leading to expansion of the autophagosomal membrane during autophagy. In addition to the protease activity, also catalyzes deconjugation of PE-conjugated forms of ATG8 during macroautophagy: ATG8 delipidation is required to release the protein from membranes, which facilitates multiple events during macroautophagy, and especially for efficient autophagosome biogenesis, the assembly of ATG9-containing tubulovesicular clusters into phagophores/autophagosomes, and for the disassembly of PAS-associated ATG components. ATG8 delipidation by ATG4 also recycles ATG8-PE generated on inappropriate membranes to maintain a reservoir of unlipidated ATG8 that is required for autophagosome formation at the PAS. Autophagy is required for proper vegetative growth, asexual/sexual reproduction, and full virulence. Autophagy is particularly involved in the biosynthesis of deoxynivalenol (DON), an important virulence determinant. The sequence is that of Cysteine protease ATG4 from Gibberella zeae (strain ATCC MYA-4620 / CBS 123657 / FGSC 9075 / NRRL 31084 / PH-1) (Wheat head blight fungus).